A 207-amino-acid polypeptide reads, in one-letter code: Ribonuclease HII (207 aa).

The RNase H type-2 domain occupies 20–207 (QLFAGVDEVG…KPVKRVLGIE (188 aa)). The a divalent metal cation site is built by D26, E27, and D118.

It belongs to the RNase HII family. Mn(2+) is required as a cofactor. Mg(2+) serves as cofactor.

It is found in the cytoplasm. The enzyme catalyses Endonucleolytic cleavage to 5'-phosphomonoester.. Endonuclease that specifically degrades the RNA of RNA-DNA hybrids. This chain is Ribonuclease HII, found in Aliivibrio salmonicida (strain LFI1238) (Vibrio salmonicida (strain LFI1238)).